The chain runs to 487 residues: Alpha-1,4-L-rhamnosidase (487 aa).

The N-terminal stretch at 1-30 (MKNKKRLCHILKYIITCFLFGVIFIIPIQA) is a signal peptide. Residue Glu-199 is the Proton donor of the active site.

This sequence belongs to the glycosyl hydrolase 39 family.

The protein localises to the periplasm. In terms of biological role, alpha-rhamnosidase involved in ulvan degradation. Ulvan is the main polysaccharide component of the Ulvales (green seaweed) cell wall. It is composed of disaccharide building blocks comprising 3-sulfated rhamnose (Rha3S) linked to D-glucuronic acid (GlcA), L-iduronic acid (IduA), or D-xylose (Xyl). Endo-acting alpha-1,4-L-rhamnosidase cleaves rhamnose sections interspersed between xylose residues within the polymer, degrading larger oligomers with consecutive Xyl-Rha3S units that are resistant to the ulvan lyases and producing dimers Xyl-Rha3S and Xyl2S-Rha3S as the smallest products. This is Alpha-1,4-L-rhamnosidase from Formosa agariphila (strain DSM 15362 / KCTC 12365 / LMG 23005 / KMM 3901 / M-2Alg 35-1).